The primary structure comprises 376 residues: METAGKVIKCKAAVAWEPGKPLSIEEVEVAPPNAHEVRIKLFATGVCHTDAYTLSGSDPEGLFPVILGHEGAGTVESVGEGVTKFKPGDTVIPLYVPQCGECKFCKNPKTNLCQKIRITQGQGLLPDKTSRFTCKGKQVFHFMGTSTFSEYTVVADISLAKVNEKAPMDKVCLLGCGISTGYGAALNTAKVEPGSTCAVFGLGAVGLAVIMGCKVAGATRIIGIDLNPAKFETAKEFGATEFVNPKDHSKPIQEVLVEMTDGGVDYSFECIGNVQIMRAALEACHKGWGESVIIGVAGAGQEISTRPFQLVTGRVWKGTAFGGWKSVESVPKLVEDYMSKKLKVDEFVTHTLPFEKINEGFELMHAGKSIRTVLTF.

Zn(2+) contacts are provided by Cys-47, His-69, Cys-99, Cys-102, Cys-105, Cys-113, and Cys-176.

This sequence belongs to the zinc-containing alcohol dehydrogenase family. Class-III subfamily. In terms of assembly, homodimer. Zn(2+) is required as a cofactor. In terms of tissue distribution, expressed in the skeletal muscle, heart, gill filaments and liver, with highest levels in the kidney.

The protein localises to the cytoplasm. The enzyme catalyses a primary alcohol + NAD(+) = an aldehyde + NADH + H(+). The catalysed reaction is a secondary alcohol + NAD(+) = a ketone + NADH + H(+). It catalyses the reaction S-(hydroxymethyl)glutathione + NADP(+) = S-formylglutathione + NADPH + H(+). It carries out the reaction S-(hydroxymethyl)glutathione + NAD(+) = S-formylglutathione + NADH + H(+). The enzyme catalyses S-nitrosoglutathione + NADH + H(+) = S-(hydroxysulfenamide)glutathione + NAD(+). In terms of biological role, class-III ADH is remarkably ineffective in oxidizing ethanol, but it readily catalyzes the oxidation of long-chain primary alcohols and the oxidation of S-(hydroxymethyl) glutathione. Also acts as a S-nitroso-glutathione reductase by catalyzing the NADH-dependent reduction of S-nitrosoglutathione, thereby regulating protein S-nitrosylation. The chain is Alcohol dehydrogenase class-3 from Sparus aurata (Gilthead sea bream).